A 953-amino-acid polypeptide reads, in one-letter code: MGFFVMIRDVSMGFMLLCISALWVLPIQGAGRESFSRNSSSSSLPSSVNVGALFTYDSFIGRAAKLAFVAAIEDINADQSILRGTKLNIVFQDTNCSGFVGTMGALQLMENKVVAAIGPQSSGIGHIISHVANELHVPFLSFAATDPTLSSLQYPYFLRTTQNDYFQMNAITDFVSYFRWREVVAIFVDDEYGRNGISVLGDALAKKRAKISYKAAFPPGADNSSISDLLASVNLMESRIFVVHVNPDSGLNIFSVAKSLGMMGSGYVWITTDWLLTALDSMEPLDPRALDLLQGVVAFRHYTPESDNKRQFKGRWKNLRFKESLKSDDGFNSYALYAYDSVWLVARALDVFFSQGNTVTFSNDPSLRNTNDSGIKLSKLHIFNEGERFLQVILEMNYTGLTGQIEFNSEKNRINPAYDILNIKSTGPLRVGYWSNHTGFSVAPPETLYSKPSNTSAKDQRLNEIIWPGEVIKPPRGWVFPENGKPLKIGVPNRVSYKNYASKDKNPLGVKGFCIDIFEAAIQLLPYPVPRTYILYGDGKKNPSYDNLISEVAANIFDVAVGDVTIITNRTKFVDFTQPFIESGLVVVAPVKGAKSSPWSFLKPFTIEMWAVTGALFLFVGAVIWILEHRFNEEFRGPPRRQIITVFWFSFSTMFFSHRENTVSTLGRFVLLVWLFVVLIINSSYTASLTSILTVQQLTSRIEGMDTLIASNEPIGVQDGTFAWKFLVNELNIAPSRIIPLKDEEEYLSALQRGPRGGGVAAIVDELPYIKALLSNSNCKFRTVGQEFTRTGWGFAFQRDSPLAVDMSTAILQLAEEGKLEKIRKKWLTYDHECTMQISDTENYQISVQSFWGLFLICGVVWFIALTLFCWKVFWQYQRLRPEESDEVQARSEEAGSSRGKSLRAVSFKDLIKVVDKREAEIKEMLKEKSSKKLKDGQSSAENSQSKDHETPQ.

The first 29 residues, 1–29 (MGFFVMIRDVSMGFMLLCISALWVLPIQG), serve as a signal peptide directing secretion. The Extracellular segment spans residues 30 to 606 (AGRESFSRNS…SPWSFLKPFT (577 aa)). Residues asparagine 38, asparagine 95, asparagine 223, asparagine 371, asparagine 397, asparagine 436, asparagine 454, and asparagine 569 are each glycosylated (N-linked (GlcNAc...) asparagine). Residues 607–627 (IEMWAVTGALFLFVGAVIWIL) form a helical membrane-spanning segment. The Cytoplasmic portion of the chain corresponds to 628–636 (EHRFNEEFR). A helical transmembrane segment spans residues 637–657 (GPPRRQIITVFWFSFSTMFFS). Over 658–668 (HRENTVSTLGR) the chain is Cytoplasmic. A helical transmembrane segment spans residues 669–689 (FVLLVWLFVVLIINSSYTASL). The Extracellular segment spans residues 690–850 (TSILTVQQLT…TENYQISVQS (161 aa)). The chain crosses the membrane as a helical span at residues 851-871 (FWGLFLICGVVWFIALTLFCW). The Cytoplasmic segment spans residues 872-953 (KVFWQYQRLR…SQSKDHETPQ (82 aa)). Residues 928–953 (EKSSKKLKDGQSSAENSQSKDHETPQ) are disordered.

It belongs to the glutamate-gated ion channel (TC 1.A.10.1) family. May form heteromers. Expressed predominantly in roots. Also detected in shoots.

It localises to the membrane. In terms of biological role, glutamate-gated receptor that probably acts as a non-selective cation channel. May be involved in light-signal transduction and calcium homeostasis via the regulation of calcium influx into cells. This chain is Glutamate receptor 3.5 (GLR3.5), found in Arabidopsis thaliana (Mouse-ear cress).